We begin with the raw amino-acid sequence, 148 residues long: F-box protein At3g55900 (148 aa).

The F-box domain maps to 9 to 59 (CRNLSELPQELLYKILGLLPTRNVVSTSLISHQRRSQFHWMERLKFRYPRL).

In Arabidopsis thaliana (Mouse-ear cress), this protein is F-box protein At3g55900.